A 435-amino-acid polypeptide reads, in one-letter code: MAQAVWSRLGRILWLACLLPWAPAGVAAGLYELNLTTDSPATTGAVVTISASLVAKDNGSLALPADAHLYRFHWIHTPLVLTGKMEKGLSSTIRVVGHVPGEFPVSVWVTAADCWMCQPVARGFVVLPITEFLVGDLVVTQNTSLPWPSSYLTKTVLKVSFLLHDPSNFLKTALFLYSWDFGDGTQMVTEDSVVYYNYSIIGTFTVKLKVVAEWEEVEPDATRAVKQKTGDFSASLKLQETLRGIQVLGPTLIQTFQKMTVTLNFLGSPPLTVCWRLKPECLPLEEGECHPVSVASTAYNLTHTFRDPGDYCFSIRAENIISKTHQYHKIQVWPSRIQPAVFAFPCATLITVMLAFIMYMTLRNATQQKDMVEVADFDFSPMSDKNPEPPSGVRCCCQMCCGPFLLETPSEYLEIVRENHGLLPPLYKSVKTYTV.

The signal sequence occupies residues 1–24; sequence MAQAVWSRLGRILWLACLLPWAPA. Residues 25–339 are Extracellular-facing; sequence GVAAGLYELN…IQVWPSRIQP (315 aa). Residues asparagine 34, asparagine 197, and asparagine 300 are each glycosylated (N-linked (GlcNAc...) asparagine). Residues 147-233 form the PKD domain; the sequence is WPSSYLTKTV…AVKQKTGDFS (87 aa). Residues 340–360 traverse the membrane as a helical segment; that stretch reads AVFAFPCATLITVMLAFIMYM. Topologically, residues 361–435 are cytoplasmic; that stretch reads TLRNATQQKD…LYKSVKTYTV (75 aa).

The protein localises to the golgi apparatus membrane. This is Transmembrane protein 130 (TMEM130) from Homo sapiens (Human).